The chain runs to 144 residues: Large ribosomal subunit protein uL11 (144 aa).

It belongs to the universal ribosomal protein uL11 family. In terms of assembly, part of the ribosomal stalk of the 50S ribosomal subunit. Interacts with L10 and the large rRNA to form the base of the stalk. L10 forms an elongated spine to which L12 dimers bind in a sequential fashion forming a multimeric L10(L12)X complex. One or more lysine residues are methylated.

Forms part of the ribosomal stalk which helps the ribosome interact with GTP-bound translation factors. The protein is Large ribosomal subunit protein uL11 of Corynebacterium glutamicum (strain R).